Reading from the N-terminus, the 486-residue chain is Glutamate--tRNA ligase 1 (486 aa).

Residues 9–19 (PSPTGMLHIGG) carry the 'HIGH' region motif. Residues 259 to 263 (KLSKR) carry the 'KMSKS' region motif. Lys-262 lines the ATP pocket.

The protein belongs to the class-I aminoacyl-tRNA synthetase family. Glutamate--tRNA ligase type 1 subfamily. In terms of assembly, monomer.

The protein resides in the cytoplasm. It carries out the reaction tRNA(Glu) + L-glutamate + ATP = L-glutamyl-tRNA(Glu) + AMP + diphosphate. Its function is as follows. Catalyzes the attachment of glutamate to tRNA(Glu) in a two-step reaction: glutamate is first activated by ATP to form Glu-AMP and then transferred to the acceptor end of tRNA(Glu). This Hyphomonas neptunium (strain ATCC 15444) protein is Glutamate--tRNA ligase 1.